Reading from the N-terminus, the 548-residue chain is MAELTISAADIEGAIEDYVSSFSADTEREEIGTVIDAGDGIAHVEGLPSVMTQELLEFPGGVLGVALNLDEHSVGAVILGEFEKIEEGQQVKRTGEVLSVPVGDAFLGRVVNPLGQPIDGQGDIAAETRRALELQAPSVVQRQSVSEPLQTGIKAIDAMTPIGRGQRQLIIGDRKTGKTAVCVDTILNQREAWLTGDPKQQVRCVYVAIGQKGTTIASVKRALEEGGAMEYTTIVAAPASDAAGFKWLAPYTGSAIGQHWMYNGKHVLIVFDDLSKQADAYRAISLLLRRPPGREAFPGDVFYLHSRLLERCAKLSDELGGGSMTGLPIIETKANDISAFIPTNVISITDGQCFLESDLFNQGVRPAINVGVSVSRVGGAAQIKAMKEVAGSLRLDLSQYRELEAFAAFASDLDAASKAQLDRGARLVELLKQPQYSPLAVEEQVVAIFLGTQGHLDSVPVEDVQRFESELLEHVKASHSDIFDGIRETKKLSEEAEEKLVSVINEFKKGFQASDGSSVVVSENAEALDPEDLEKESVKVRKPAPKKA.

Residue 172–179 coordinates ATP; it reads GDRKTGKT.

The protein belongs to the ATPase alpha/beta chains family. As to quaternary structure, F-type ATPases have 2 components, CF(1) - the catalytic core - and CF(0) - the membrane proton channel. CF(1) has five subunits: alpha(3), beta(3), gamma(1), delta(1), epsilon(1). CF(0) has three main subunits: a(1), b(2) and c(9-12). The alpha and beta chains form an alternating ring which encloses part of the gamma chain. CF(1) is attached to CF(0) by a central stalk formed by the gamma and epsilon chains, while a peripheral stalk is formed by the delta and b chains.

It localises to the cell membrane. It catalyses the reaction ATP + H2O + 4 H(+)(in) = ADP + phosphate + 5 H(+)(out). Its function is as follows. Produces ATP from ADP in the presence of a proton gradient across the membrane. The alpha chain is a regulatory subunit. This chain is ATP synthase subunit alpha, found in Mycolicibacterium smegmatis (strain ATCC 700084 / mc(2)155) (Mycobacterium smegmatis).